A 262-amino-acid chain; its full sequence is Ribosomal RNA small subunit methyltransferase A (262 aa).

Positions 14, 16, 41, 62, 87, and 109 each coordinate S-adenosyl-L-methionine.

Belongs to the class I-like SAM-binding methyltransferase superfamily. rRNA adenine N(6)-methyltransferase family. RsmA subfamily.

The protein resides in the cytoplasm. The enzyme catalyses adenosine(1518)/adenosine(1519) in 16S rRNA + 4 S-adenosyl-L-methionine = N(6)-dimethyladenosine(1518)/N(6)-dimethyladenosine(1519) in 16S rRNA + 4 S-adenosyl-L-homocysteine + 4 H(+). Functionally, specifically dimethylates two adjacent adenosines (A1518 and A1519) in the loop of a conserved hairpin near the 3'-end of 16S rRNA in the 30S particle. May play a critical role in biogenesis of 30S subunits. The sequence is that of Ribosomal RNA small subunit methyltransferase A from Francisella tularensis subsp. tularensis (strain FSC 198).